We begin with the raw amino-acid sequence, 44 residues long: Antimicrobial peptide 2 (44 aa).

Post-translationally, disulfide bonds. Expressed in flowers but not in leaves, seeds or roots (at protein level).

Functionally, antimicrobial peptide. Active against fungal species B.cinerea (IC(50)=5.2 uM), A.niger (IC(50)=2.6 uM) and B.sorokinina (IC(50)=5.2 uM) but not against F.oxysporum, F.graminearum and P.debaryanum at concentrations below 10 uM. Inhibits growth of P.infestans at concentration between 1.3 uM and 5.2 uM. Active against bacterial species P.syringae, B.subtilis, X.campestris and C.michiganense. This Taraxacum officinale (Common dandelion) protein is Antimicrobial peptide 2.